A 422-amino-acid polypeptide reads, in one-letter code: MNDRFERLLKSRIGLDASSVGSAVIERAVRQRMSGLALHDEDEYWMRLNGSPGEVQALIEAVVVPETWFFRYPESFTTLARLAFERLPSLGGGRALRILSLPCSTGEEPYSIVMALLDAGLSEYLFEVDALDVSARVIERASLGVYGRNSFRGDELGFRDRHFSEVAEGYQLAEQVRRKVRFRCGNLLDPGLLAGEAPYDFVFCRNLLIYFDRPTQSEVVEVLKRLLRPDGAMFIGPAEASLLSQHGMQPIGVPLSFVFRRTSEAPRGARPKAVSDGARPVVAAAVERASIRPSPPPPAKPRQRLSSLVPPASGQPLASPVGEFDEIARLADAGQHREARAACERQLAARGPSATVFYWLGLLSDVAGQEQEAQDFYRKALYLEPQHAEALAHLAALLAARGDHAGARRLQQRAARGVNKDG.

In terms of domain architecture, CheR-type methyltransferase spans 1–264; it reads MNDRFERLLK…LSFVFRRTSE (264 aa). Residues Thr67, Arg71, Glu108, Asp132, 186-187, and 205-206 each bind S-adenosyl-L-methionine; these read NL and RN. Residues 289 to 316 form a disordered region; it reads ASIRPSPPPPAKPRQRLSSLVPPASGQP. The TPR repeat unit spans residues 354–387; the sequence is ATVFYWLGLLSDVAGQEQEAQDFYRKALYLEPQH.

In terms of assembly, monomer.

In terms of biological role, involved in biofilm formation. The chain is Probable biofilm formation methyltransferase WspC (wspC) from Pseudomonas aeruginosa (strain ATCC 15692 / DSM 22644 / CIP 104116 / JCM 14847 / LMG 12228 / 1C / PRS 101 / PAO1).